We begin with the raw amino-acid sequence, 417 residues long: Serine hydroxymethyltransferase (417 aa).

Residues L121 and 125 to 127 contribute to the (6S)-5,6,7,8-tetrahydrofolate site; that span reads GHL. The residue at position 229 (K229) is an N6-(pyridoxal phosphate)lysine. 354 to 356 is a binding site for (6S)-5,6,7,8-tetrahydrofolate; it reads SPF.

This sequence belongs to the SHMT family. Homodimer. Pyridoxal 5'-phosphate serves as cofactor.

It is found in the cytoplasm. It catalyses the reaction (6R)-5,10-methylene-5,6,7,8-tetrahydrofolate + glycine + H2O = (6S)-5,6,7,8-tetrahydrofolate + L-serine. It functions in the pathway one-carbon metabolism; tetrahydrofolate interconversion. The protein operates within amino-acid biosynthesis; glycine biosynthesis; glycine from L-serine: step 1/1. In terms of biological role, catalyzes the reversible interconversion of serine and glycine with tetrahydrofolate (THF) serving as the one-carbon carrier. This reaction serves as the major source of one-carbon groups required for the biosynthesis of purines, thymidylate, methionine, and other important biomolecules. Also exhibits THF-independent aldolase activity toward beta-hydroxyamino acids, producing glycine and aldehydes, via a retro-aldol mechanism. This is Serine hydroxymethyltransferase from Azotobacter vinelandii (strain DJ / ATCC BAA-1303).